Reading from the N-terminus, the 224-residue chain is Envelope glycoprotein L (224 aa).

A signal peptide spans 1 to 16 (MGFVCLFGLVVMGAWG). The tract at residues 20-161 (GSQATEYVLR…FDYSRTRRCV (142 aa)) is interaction with gH. One can recognise a gL alphaherpesvirus-type domain in the interval 23–201 (ATEYVLRSVI…LATQPPVLAL (179 aa)). 2 disulfides stabilise this stretch: C44–C76 and C149–C160. The interval 168–224 (PANTTSTWEPPVSSDDEASSQSKPLATQPPVLALSNAPPRRVSPTRGRRRHTRLRRN) is disordered. Residues 213–224 (RGRRRHTRLRRN) are compositionally biased toward basic residues.

It belongs to the herpesviridae glycoprotein L (gL) family. Alphaherpesvirinae gL subfamily. In terms of assembly, interacts with glycoprotein H (gH); this interaction is necessary for the correct processing and cell surface expression of gH. The heterodimer gH/gL seems to interact with gB trimers during fusion.

The protein localises to the virion membrane. It is found in the host cell membrane. Its subcellular location is the host Golgi apparatus. It localises to the host trans-Golgi network. In terms of biological role, the heterodimer glycoprotein H-glycoprotein L is required for the fusion of viral and plasma membranes leading to virus entry into the host cell. Acts as a functional inhibitor of gH and maintains gH in an inhibited form. Upon binding to host integrins, gL dissociates from gH leading to activation of the viral fusion glycoproteins gB and gH. The chain is Envelope glycoprotein L from Homo sapiens (Human).